We begin with the raw amino-acid sequence, 519 residues long: Laccase-2 (519 aa).

The signal sequence occupies residues 1–20 (MGLQRFSFFVTLALVARSLA). Plastocyanin-like domains lie at 22–147 (IGPV…FVVY) and 159–301 (VDNE…ILRY). Asparagine 74 carries an N-linked (GlcNAc...) asparagine glycan. The Cu cation site is built by histidine 84, histidine 86, histidine 129, and histidine 131. Cystine bridges form between cysteine 105–cysteine 508 and cysteine 137–cysteine 225. 6 N-linked (GlcNAc...) asparagine glycosylation sites follow: asparagine 161, asparagine 228, asparagine 237, asparagine 271, asparagine 353, and asparagine 361. One can recognise a Plastocyanin-like 3 domain in the interval 368–490 (TVPVLLQILS…AGFAIVFAED (123 aa)). Cu cation contacts are provided by histidine 415, histidine 418, histidine 420, histidine 472, cysteine 473, histidine 474, and histidine 478.

It belongs to the multicopper oxidase family. As to quaternary structure, homodimer. The cofactor is Cu cation.

The protein resides in the secreted. The catalysed reaction is 4 hydroquinone + O2 = 4 benzosemiquinone + 2 H2O. Its function is as follows. Lignin degradation and detoxification of lignin-derived products. This chain is Laccase-2, found in Trametes villosa (White-rot fungus).